Reading from the N-terminus, the 80-residue chain is uncharacterized protein (80 aa).

An N-terminal signal peptide occupies residues 1 to 20 (MVAADHRALGSNKSYPASQT). The interval 1–21 (MVAADHRALGSNKSYPASQTA) is disordered. The span at 11–21 (SNKSYPASQTA) shows a compositional bias: polar residues.

This is an uncharacterized protein from Mycobacterium tuberculosis (strain CDC 1551 / Oshkosh).